Here is a 205-residue protein sequence, read N- to C-terminus: MATDFLFPKIADCSYVSCYCEENVWKLCEQVQRTRPEELSKCYAVFVSNEGRTVPLWRQKAGRGDDQVVIWDYHVFFMHNPLPNRCLVYDLDTTLPFPTYFHKYVTETFRSDLALRPEHHRFFRVIPADTYLIEFSSDRRHMRRPDGSWIKPPPSYPPILSNTNMHCLGDFICMSAGKGPGAVYSLSEFVQYFYKSPHVVAQHNK.

Residues Cys-20, His-74, and Asp-90 contribute to the active site.

The protein belongs to the NTAQ1 family. Monomer.

The catalysed reaction is N-terminal L-glutaminyl-[protein] + H2O = N-terminal L-glutamyl-[protein] + NH4(+). Mediates the side-chain deamidation of N-terminal glutamine residues to glutamate, an important step in N-end rule pathway of protein degradation. Conversion of the resulting N-terminal glutamine to glutamate renders the protein susceptible to arginylation, polyubiquitination and degradation as specified by the N-end rule. Does not act on substrates with internal or C-terminal glutamine and does not act on non-glutamine residues in any position. The protein is Protein N-terminal glutamine amidohydrolase (tun) of Drosophila mojavensis (Fruit fly).